Consider the following 349-residue polypeptide: Histidinol-phosphate aminotransferase 1 (349 aa).

Lys-213 carries the N6-(pyridoxal phosphate)lysine modification.

This sequence belongs to the class-II pyridoxal-phosphate-dependent aminotransferase family. Histidinol-phosphate aminotransferase subfamily. Homodimer. Requires pyridoxal 5'-phosphate as cofactor.

It catalyses the reaction L-histidinol phosphate + 2-oxoglutarate = 3-(imidazol-4-yl)-2-oxopropyl phosphate + L-glutamate. The protein operates within amino-acid biosynthesis; L-histidine biosynthesis; L-histidine from 5-phospho-alpha-D-ribose 1-diphosphate: step 7/9. The sequence is that of Histidinol-phosphate aminotransferase 1 from Carboxydothermus hydrogenoformans (strain ATCC BAA-161 / DSM 6008 / Z-2901).